Consider the following 62-residue polypeptide: MFTLKKSLLLLFFLGTINLSLCEEERDADEEERRDDPEERAVQVEKRILPILAPLIGGLLGK.

The first 22 residues, 1–22 (MFTLKKSLLLLFFLGTINLSLC), serve as a signal peptide directing secretion. A propeptide spanning residues 23-45 (EEERDADEEERRDDPEERAVQVE) is cleaved from the precursor. At Leu-60 the chain carries Leucine amide.

The protein belongs to the frog skin active peptide (FSAP) family. Temporin subfamily. Expressed by the skin glands.

The protein localises to the secreted. Its function is as follows. Antimicrobial peptide. Has low activity against the Gram-positive bacterium S.aureus (MIC&gt;100 uM) and the Gram-negative bacterium E.coli (MIC&gt;100 uM). Has weak hemolytic activity against human erythrocytes. The protein is Temporin-CDYb of Rana dybowskii (Dybovsky's frog).